We begin with the raw amino-acid sequence, 686 residues long: MTVGKLMIGLLIPILVATVYAEGSPAGSKRHEKFIPMVAFSCGYRNQYMTEEGSWKTDDERYATCFSGKLDILKYCRKAYPSMNITNIVEYSHEVSISDWCREEGSPCKWTHSVRPYHCIDGEFHSEALQVPHDCQFSHVNSRDQCNDYQHWKDEAGKQCKTKKSKGNKDMIVRSFAVLEPCALDMFTGVEFVCCPNDQTNKTDVQKTKEDEDDDDDEDDAYEDDYSEESDEKDEEEPSSQDPYFKIANWTNEHDDFKKAEMRMDEKHRKKVDKVMKEWGDLETRYNEQKAKDPKGAEKFKSQMNARFQKTVSSLEEEHKRMRKEIEAVHEERVQAMLNEKKRDATHDYRQALATHVNKPNKHSVLQSLKAYIRAEEKDRMHTLNRYRHLLKADSKEAAAYKPTVIHRLRYIDLRINGTLAMLRDFPDLEKYVRPIAVTYWKDYRDEVSPDISVEDSELTPIIHDDEFSKNAKLDVKAPTTTAKPVKETDNAKVLPTEASDSEEEADEYYEDEDDEQVKKTPDMKKKVKVVDIKPKEIKVTIEEEKKAPKLVETSVQTDDEDDDEDSSSSTSSESDEDEDKNIKELRVDIEPIIDEPASFYRHDKLIQSPEVERSASSVFQPYVLASAMFITAICIIAFAITNARRRRAMRGFIEVDVYTPEERHVAGMQVNGYENPTYSFFDSKA.

Residues 1-21 form the signal peptide; that stretch reads MTVGKLMIGLLIPILVATVYA. Residues 22-621 lie on the Extracellular side of the membrane; it reads EGSPAGSKRH…VERSASSVFQ (600 aa). A GFLD subdomain region spans residues 32–125; sequence EKFIPMVAFS…PYHCIDGEFH (94 aa). An E1 domain is found at 32–197; the sequence is EKFIPMVAFS…TGVEFVCCPN (166 aa). Intrachain disulfides connect Cys42/Cys65, Cys76/Cys119, Cys101/Cys108, Cys135/Cys195, Cys146/Cys182, and Cys160/Cys194. N-linked (GlcNAc...) asparagine glycosylation occurs at Asn84. The interval 133–197 is cuBD subdomain; it reads HDCQFSHVNS…TGVEFVCCPN (65 aa). A glycan (N-linked (GlcNAc...) asparagine) is linked at Asn201. Residues 201–245 are disordered; it reads NKTDVQKTKEDEDDDDDEDDAYEDDYSEESDEKDEEEPSSQDPYF. Acidic residues predominate over residues 211–239; it reads DEDDDDDEDDAYEDDYSEESDEKDEEEPS. An E2 domain is found at 240–440; the sequence is SQDPYFKIAN…KYVRPIAVTY (201 aa). Asn249 is a glycosylation site (N-linked (GlcNAc...) asparagine). Residues 252–255 and His382 contribute to the heparin site; that span reads NEHD. Asn417 is a glycosylation site (N-linked (GlcNAc...) asparagine). Disordered stretches follow at residues 479–526 and 550–585; these read PTTT…DMKK and KLVE…NIKE. Residues 500–516 show a composition bias toward acidic residues; it reads SDSEEEADEYYEDEDDE. A compositionally biased stretch (basic and acidic residues) spans 517 to 526; the sequence is QVKKTPDMKK. The span at 558–567 shows a compositional bias: acidic residues; the sequence is TDDEDDDEDS. Residues 622 to 642 traverse the membrane as a helical segment; that stretch reads PYVLASAMFITAICIIAFAIT. At 643–686 the chain is on the cytoplasmic side; that stretch reads NARRRRAMRGFIEVDVYTPEERHVAGMQVNGYENPTYSFFDSKA. The YENPXY motif signature appears at 674–679; sequence YENPTY.

Belongs to the APP family. In terms of assembly, interacts (via cytoplasmic domain) with feh-1 (via PID 2 domain). Extracellular region is proteolytically cleaved. As to expression, expressed in the head, pharynx, spermatheca, uterus, vulva, tail and ventral neurons. Specifically expressed in nerve ring interneurons, the ventral cord, socket and amphids in the head, with strong expression in junctional cells, including the pharyngeal intestinal valve and uterine seam junction, and the excretory cell and weak expression in epidermal epithelial cells, including hyp7 cells, vulval cells, rectal valve cells, pharyngeal arcade cells and the tail hypodermis.

It localises to the membrane. The protein resides in the early endosome. In terms of biological role, required for normal developmental progression throughout all life stages. Specifically required for the molt stage during all larval transitions and morphogenesis. Acts with heterochronic genes, including members of the let-7 family, to regulate larval stage to adult transition. Acts synergistically with acn-1 in let-7 regulated postembryonic cell division of hypodermal seam cells. Acts in multiple pathways to influence daf-12 and daf-16 activity to in turn regulate physiological and reproductive processes such as body size and egg-laying. May play a role in neurotransmission. This Caenorhabditis elegans protein is Amyloid-beta-like protein.